A 408-amino-acid polypeptide reads, in one-letter code: MQQTTFEESRYHWQDSLENVAVCLPFRCPRCGDHTRFRSLSSLRAHLEFSHSYEERTLLTKCSLLPSLKDTELLRSSELPKQGKVLRGHAKVTKQKSSYVNLYSISHGHSKDTKPFEMVAERPVSYVQTYTAVDIRADSLDAPCASPGLPTQDTKAAFEAHVREKFNRMVEAVDRTIEKRIDKLTKELAQKTAELLEVRAAFAQLTQKKQEVQRRERALNKQVDVAVEMIAVLKQRLTESEEELLRKEEEVVTFNHFLEAAAEKEVQGKARLQDFIENLLQRVELAEKQLEYYQSQQASGFSCDTSEHMLTDIPSNRKPRCLSRGHQHSVCNHPEMRAHFHLKGRSYLKKAKDERAGMQPAKAIHEPAESPREFFRPAKKGEHLGLSRKGNFRPKMAKKKPTAIVNII.

Position 16 is a phosphoserine (S16). Residues F26–H51 form a C2H2-type; degenerate zinc finger. Phosphoserine is present on residues S139 and S146. Residues V170–A298 are a coiled coil. T176 bears the Phosphothreonine mark. Position 370 is a phosphoserine (S370).

Homodimer. Interacts with NDE1 and NDEL1. Interacts with DISC1. Interacts with PARP1. Interacts with MCRS1. As to expression, detected in several tissues, with highest levels in brain. Also expressed during embryonic development. Expressed in cerebral cortex, hippocampus, striatum, inferior colliculus and thalamus.

It localises to the cytoplasm. The protein localises to the cytoskeleton. The protein resides in the microtubule organizing center. Its subcellular location is the centrosome. Contributes to genomic stability by preventing telomere dysfunction. Involved in the morphogenesis of basket cells in the somatosensory cortex during embryogenesis. Involved in the positive regulation of oligodendrocyte differentiation during postnatal growth. Involved in dendritic arborization, morphogenesis of spine density dendrite, and establishment of postsynaptic dendrite density in cortical pyramidal neurons. Involved in the regulation of neurogenesis. Negatively regulates neurite outgrowth. Involved in homologous recombination (HR) repair pathway. Required for proper resolution of DNA double-strand breaks (DSBs) by HR. Is required for recovery of stalled replication forks, and directly contributes to genomic stability. Interacts with PARP1 and mediates MRE11-dependent DNA end resection during replication fork recovery. In Mus musculus (Mouse), this protein is Protein ZNF365 (Znf365).